The primary structure comprises 375 residues: Chaperone protein DnaJ 1 (375 aa).

In terms of domain architecture, J spans 4 to 68; that stretch reads DYYAILGVER…EKRRIVDMGG (65 aa). A CR-type zinc finger spans residues 127-209; sequence GTKKPITIDT…CGGDGRVRTQ (83 aa). Cysteine 140, cysteine 143, cysteine 157, cysteine 160, cysteine 183, cysteine 186, cysteine 197, and cysteine 200 together coordinate Zn(2+). 4 CXXCXGXG motif repeats span residues 140–147, 157–164, 183–190, and 197–204; these read CDRCEGTG, CSTCNGSG, CPTCRGTG, and CDKCGGDG.

The protein belongs to the DnaJ family. Homodimer. Zn(2+) is required as a cofactor.

It localises to the cytoplasm. Functionally, participates actively in the response to hyperosmotic and heat shock by preventing the aggregation of stress-denatured proteins and by disaggregating proteins, also in an autonomous, DnaK-independent fashion. Unfolded proteins bind initially to DnaJ; upon interaction with the DnaJ-bound protein, DnaK hydrolyzes its bound ATP, resulting in the formation of a stable complex. GrpE releases ADP from DnaK; ATP binding to DnaK triggers the release of the substrate protein, thus completing the reaction cycle. Several rounds of ATP-dependent interactions between DnaJ, DnaK and GrpE are required for fully efficient folding. Also involved, together with DnaK and GrpE, in the DNA replication of plasmids through activation of initiation proteins. This Corynebacterium diphtheriae (strain ATCC 700971 / NCTC 13129 / Biotype gravis) protein is Chaperone protein DnaJ 1.